The primary structure comprises 364 residues: Ribosomal RNA large subunit methyltransferase M (364 aa).

S-adenosyl-L-methionine-binding positions include Ser187, 220 to 223, Asp239, Asp259, and Asp276; that span reads CPGG. The active-site Proton acceptor is Lys305.

The protein belongs to the class I-like SAM-binding methyltransferase superfamily. RNA methyltransferase RlmE family. RlmM subfamily. As to quaternary structure, monomer.

The protein localises to the cytoplasm. It catalyses the reaction cytidine(2498) in 23S rRNA + S-adenosyl-L-methionine = 2'-O-methylcytidine(2498) in 23S rRNA + S-adenosyl-L-homocysteine + H(+). Functionally, catalyzes the 2'-O-methylation at nucleotide C2498 in 23S rRNA. The protein is Ribosomal RNA large subunit methyltransferase M of Aeromonas hydrophila subsp. hydrophila (strain ATCC 7966 / DSM 30187 / BCRC 13018 / CCUG 14551 / JCM 1027 / KCTC 2358 / NCIMB 9240 / NCTC 8049).